A 434-amino-acid chain; its full sequence is Beta-phenylalanine transaminase (434 aa).

Residue Arg41 participates in (S)-3-amino-3-phenylpropanoate binding. 132–133 (GT) is a binding site for pyridoxal 5'-phosphate. Lys267 is modified (N6-(pyridoxal phosphate)lysine). Pyridoxal 5'-phosphate is bound at residue Thr300.

The protein belongs to the class-III pyridoxal-phosphate-dependent aminotransferase family. In terms of assembly, homodimer. Requires pyridoxal 5'-phosphate as cofactor.

It carries out the reaction (S)-3-amino-3-phenylpropanoate + 2-oxoglutarate = 3-oxo-3-phenylpropanoate + L-glutamate. It catalyses the reaction (S)-3-amino-3-phenylpropanoate + pyruvate = 3-oxo-3-phenylpropanoate + L-alanine. With respect to regulation, is inhibited by 2-aminooxyacetate (AOA), a mimic of beta-alanine and a known inhibitor of aminotransferases. Aminotransferase that acts exclusively on beta-amino acids and exhibits a broad substrate range in vitro, accepting meta-, para- and, to a lesser extent, ortho-substituted beta-phenylalanine derivatives as amino donors, and 2-oxoglutarate or pyruvate as amino acceptors. Is highly enantioselective toward (S)-beta-phenylalanine (is not active with (R)-beta-phenylalanine) and derivatives with different substituents on the phenyl ring, allowing the kinetic resolution of various racemic beta-amino acids to yield (R)-beta-amino acids with &gt;95% enantiomeric excess (ee). Highly prefers aromatic beta-amino acids over aliphatic beta-amino acids; cannot use beta-alanine or beta-glutamate as substrate. Is likely involved in the beta-phenylalanine degradation pathway that allows V.paradoxus strain CBF3 to use beta-phenylalanine as a sole nitrogen source. The polypeptide is Beta-phenylalanine transaminase (Variovorax paradoxus).